The primary structure comprises 176 residues: ATP synthase subunit delta (176 aa).

The protein belongs to the ATPase delta chain family. F-type ATPases have 2 components, F(1) - the catalytic core - and F(0) - the membrane proton channel. F(1) has five subunits: alpha(3), beta(3), gamma(1), delta(1), epsilon(1). F(0) has three main subunits: a(1), b(2) and c(10-14). The alpha and beta chains form an alternating ring which encloses part of the gamma chain. F(1) is attached to F(0) by a central stalk formed by the gamma and epsilon chains, while a peripheral stalk is formed by the delta and b chains.

It localises to the cell membrane. In terms of biological role, f(1)F(0) ATP synthase produces ATP from ADP in the presence of a proton or sodium gradient. F-type ATPases consist of two structural domains, F(1) containing the extramembraneous catalytic core and F(0) containing the membrane proton channel, linked together by a central stalk and a peripheral stalk. During catalysis, ATP synthesis in the catalytic domain of F(1) is coupled via a rotary mechanism of the central stalk subunits to proton translocation. Its function is as follows. This protein is part of the stalk that links CF(0) to CF(1). It either transmits conformational changes from CF(0) to CF(1) or is implicated in proton conduction. This chain is ATP synthase subunit delta, found in Wigglesworthia glossinidia brevipalpis.